The following is a 397-amino-acid chain: uncharacterized protein (397 aa).

It belongs to the ROK (NagC/XylR) family.

This is an uncharacterized protein from Escherichia coli (strain K12).